The sequence spans 461 residues: MFDDKGKYLILGLGKSGQGAVIGLSNFEDCQVAVTDRKNLDDIRDAAAILEEHNVPYLNERESVERLSEFDILVKSPGIPMDNNIITKAKELGMPVIDELELGYQILNYRLTKPEERLIAVTGTNGKTTTTNLIGEFFEASGYSIYVAGNVGLPLSQIACEVTDTDFIVLEVSSFQLEFIKGFRPKVSMILNITPDHLDWHGDLDSYIRAKMNIFKNQTSKDFSVVNVDDETTFGLNRESKGRKLNFSKNSLRTEGSFIEDDHLVINYLDTKTSIIHKHDILLPGEHNLENVLAATTATLPFSISEENIRNTLKAFSGVDHRLELVRELNGVKFINDSKGTNVEASLKAINSFDSMILIAGGKDKGADFSEFAEAIKEKGVKKVYLFGETYKKIASALDKVYYPEYYIVNNLETAVTGAYQDAISGDVVLLSPACASWDMYDSFEKRGNHFKSIVYSLGGE.

123 to 129 (GTNGKTT) is an ATP binding site.

This sequence belongs to the MurCDEF family.

Its subcellular location is the cytoplasm. The catalysed reaction is UDP-N-acetyl-alpha-D-muramoyl-L-alanine + D-glutamate + ATP = UDP-N-acetyl-alpha-D-muramoyl-L-alanyl-D-glutamate + ADP + phosphate + H(+). It functions in the pathway cell wall biogenesis; peptidoglycan biosynthesis. Cell wall formation. Catalyzes the addition of glutamate to the nucleotide precursor UDP-N-acetylmuramoyl-L-alanine (UMA). This is UDP-N-acetylmuramoylalanine--D-glutamate ligase from Natranaerobius thermophilus (strain ATCC BAA-1301 / DSM 18059 / JW/NM-WN-LF).